We begin with the raw amino-acid sequence, 311 residues long: Nucleotide-binding protein Acel_1111 (311 aa).

30 to 37 contributes to the ATP binding site; it reads GLSGAGRS. 81–84 contributes to the GTP binding site; sequence DVRS.

Belongs to the RapZ-like family.

Displays ATPase and GTPase activities. In Acidothermus cellulolyticus (strain ATCC 43068 / DSM 8971 / 11B), this protein is Nucleotide-binding protein Acel_1111.